The following is a 495-amino-acid chain: MTIGYIIGSATINEATAILEQKIRAGYYVILEYDGDKILGLITNVYTGSPLLDDNLNDVKFVQRIKQLEANKIPFFIKARIKLLCKLDGKFTQPDLPPVAGTPVRLASDEELSTVFSAGDVRIGKLIGSNVEVKIRLNPLSRHLAILAATGSGKSNTVAILSQRLVEIGGSILIFDYHGEYYDSTLPNLNIIEPKLNPLYLSVNEFATLLEIRENANIQYRIIRRTFNQLKEEINNEIKEGKTSLAELNSNFFERLKVKIEEEGRNEKRKESKDEVLNKVEDFAERYSDIIDITFGDVINKIKLGKINVVNLSSLDEDAIDAIVAHYLRRILTSRKENKIKKDSGLKFPILTVVEEAHVLLSKDTNTLTKKWAGRIAREGRKFGVGLIIVSQRPKGLDENILSQMTNKIILKIVEPSDKKYVLETSDNLSEDLADGLSSLDTGEAIIIGNVVKLPTIIKIDKFEGKLSGSDPNLTEEWKRAKEEEIVHSDVSDWG.

ATP-binding positions include R142, 151–156 (GSGKSN), and 459–460 (KI).

This sequence belongs to the HerA family. As to quaternary structure, interacts with Rad50 and Mre11.

The enzyme catalyses Couples ATP hydrolysis with the unwinding of duplex DNA at the replication fork by translocating in the 5'-3' direction. This creates two antiparallel DNA single strands (ssDNA). The leading ssDNA polymer is the template for DNA polymerase III holoenzyme which synthesizes a continuous strand.. It catalyses the reaction ATP + H2O = ADP + phosphate + H(+). It carries out the reaction Couples ATP hydrolysis with the unwinding of duplex DNA by translocating in the 3'-5' direction.. With respect to regulation, ATPase activity is slightly stimulated by either circular single- or double-stranded (ds)DNA with a weak preference for dsDNA. In terms of biological role, involved in DNA double-strand break (DSB) repair. Probably acts with NurA to stimulate resection of the 5' strand and produce the long 3' single-strand that is required for RadA loading. Has DNA-dependent ATPase activity and bidirectional DNA helicase activity. Loads on either a 3' or a 5' DNA tail for subsequent DNA unwinding; has no activity on blunt-end DNA. The chain is DNA double-strand break repair helicase HerA from Sulfolobus acidocaldarius (strain ATCC 33909 / DSM 639 / JCM 8929 / NBRC 15157 / NCIMB 11770).